The sequence spans 609 residues: Proline--tRNA ligase (609 aa).

The protein belongs to the class-II aminoacyl-tRNA synthetase family. ProS type 1 subfamily. In terms of assembly, homodimer.

It localises to the cytoplasm. It catalyses the reaction tRNA(Pro) + L-proline + ATP = L-prolyl-tRNA(Pro) + AMP + diphosphate. Functionally, catalyzes the attachment of proline to tRNA(Pro) in a two-step reaction: proline is first activated by ATP to form Pro-AMP and then transferred to the acceptor end of tRNA(Pro). As ProRS can inadvertently accommodate and process non-cognate amino acids such as alanine and cysteine, to avoid such errors it has two additional distinct editing activities against alanine. One activity is designated as 'pretransfer' editing and involves the tRNA(Pro)-independent hydrolysis of activated Ala-AMP. The other activity is designated 'posttransfer' editing and involves deacylation of mischarged Ala-tRNA(Pro). The misacylated Cys-tRNA(Pro) is not edited by ProRS. This is Proline--tRNA ligase from Synechococcus sp. (strain JA-2-3B'a(2-13)) (Cyanobacteria bacterium Yellowstone B-Prime).